Reading from the N-terminus, the 218-residue chain is Small ribosomal subunit protein uS3c (218 aa).

A KH type-2 domain is found at 47–118 (VQKHMRVSSG…RLNIAITRVA (72 aa)).

This sequence belongs to the universal ribosomal protein uS3 family. Part of the 30S ribosomal subunit.

It localises to the plastid. The protein localises to the chloroplast. This is Small ribosomal subunit protein uS3c (rps3) from Illicium oligandrum (Star anise).